Consider the following 221-residue polypeptide: Ribonuclease S-2 (221 aa).

The first 20 residues, 1–20 (MIYIFTMVFSLNVLILSSSA), serve as a signal peptide directing secretion. Glutamine 31 serves as a coordination point for RNA. A disulfide bond links cysteine 37 and cysteine 44. RNA-binding positions include histidine 55, 91–92 (NV), phenylalanine 101, 104–105 (KQ), and 108–109 (KH). Histidine 55 serves as the catalytic Proton donor. An intrachain disulfide couples cysteine 70 to cysteine 112. Asparagine 91 carries N-linked (GlcNAc...) asparagine glycosylation. Residue glutamine 105 is part of the active site. Histidine 109 serves as the catalytic Proton acceptor. 3 N-linked (GlcNAc...) asparagine glycosylation sites follow: asparagine 137, asparagine 153, and asparagine 195. 2 disulfide bridges follow: cysteine 176/cysteine 214 and cysteine 191/cysteine 202.

This sequence belongs to the RNase T2 family. N-linked core structure at Asn-91, Asn-137, and Asn-153 contains xylose and at Asn-195 contains xylose and fucose.

It is found in the secreted. The protein localises to the extracellular space. It carries out the reaction a ribonucleotidyl-ribonucleotide-RNA + H2O = a 3'-end 3'-phospho-ribonucleotide-RNA + a 5'-end dephospho-ribonucleoside-RNA + H(+). Its function is as follows. Self-incompatibility (SI) is the inherited ability of a flowering plant to prevent self-fertilization by discriminating between self and non-self pollen during pollination. In many species, self-incompatibility is controlled by the single, multiallelic locus S. This Pyrus pyrifolia (Chinese pear) protein is Ribonuclease S-2.